Reading from the N-terminus, the 443-residue chain is Probable glycine dehydrogenase (decarboxylating) subunit 1 (443 aa).

The protein belongs to the GcvP family. N-terminal subunit subfamily. In terms of assembly, the glycine cleavage system is composed of four proteins: P, T, L and H. In this organism, the P 'protein' is a heterodimer of two subunits.

The catalysed reaction is N(6)-[(R)-lipoyl]-L-lysyl-[glycine-cleavage complex H protein] + glycine + H(+) = N(6)-[(R)-S(8)-aminomethyldihydrolipoyl]-L-lysyl-[glycine-cleavage complex H protein] + CO2. Its function is as follows. The glycine cleavage system catalyzes the degradation of glycine. The P protein binds the alpha-amino group of glycine through its pyridoxal phosphate cofactor; CO(2) is released and the remaining methylamine moiety is then transferred to the lipoamide cofactor of the H protein. The sequence is that of Probable glycine dehydrogenase (decarboxylating) subunit 1 from Endomicrobium trichonymphae.